Reading from the N-terminus, the 425-residue chain is MASKEMFEDTVEERVINEEYKIWKKNTPFLYDLVMTHALQWPSLTVQWLPEVTKPEGKDYALHWLVLGTHTSDEQNHLVVARVHIPNDDAQFDASHCDSEKGEFGGFGSVTGKIECEIKINHEGEVNRARYMPQNPHIIATKTPSSDVLVFDYTKHPAKPDPSGECNPDLRLRGHQKEGYGLSWNSNLSGHLLSASDDHTVCLWDINAGPKEGKIVDAKAIFTGHSAVVEDVAWHLLHESLFGSVADDQKLMIWDTRSNTTSKPSHLVDAHTAEVNCLSFNPYSEFILATGSADKTVALWDLRNLKLKLHTFESHKDEIFQVHWSPHNETILASSGTDRRLNVWDLSKIGEEQSAEDAEDGPPELLFIHGGHTAKISDFSWNPNEPWVICSVSEDNIMQIWQMAENIYNDEESDVTTPELEGQGS.

Alanine 2 is modified (N-acetylalanine). Serine 3 is subject to Phosphoserine. An N6-acetyllysine; alternate modification is found at lysine 4. Lysine 4 participates in a covalent cross-link: Glycyl lysine isopeptide (Lys-Gly) (interchain with G-Cter in SUMO2); alternate. Lysine 4 is covalently cross-linked (Glycyl lysine isopeptide (Lys-Gly) (interchain with G-Cter in ubiquitin); alternate). A Phosphothreonine modification is found at threonine 10. 7 WD repeats span residues 47–122 (QWLP…KINH), 128–173 (RARY…LRLR), 181–217 (GLSW…KIVD), 228–269 (VVED…HLVD), 275–312 (VNCL…LHTF), 318–369 (EIFQ…LFIH), and 376–403 (ISDF…IWQM). The residue at position 95 (serine 95) is a Phosphoserine. Lysine 101 is covalently cross-linked (Glycyl lysine isopeptide (Lys-Gly) (interchain with G-Cter in SUMO2)). Lysine 119 carries the N6-acetyllysine modification. Lysine 155 participates in a covalent cross-link: Glycyl lysine isopeptide (Lys-Gly) (interchain with G-Cter in SUMO2). The residue at position 159 (lysine 159) is an N6-acetyllysine; alternate. A Glycyl lysine isopeptide (Lys-Gly) (interchain with G-Cter in SUMO2); alternate cross-link involves residue lysine 159. Serine 354 carries the phosphoserine modification.

This sequence belongs to the WD repeat RBAP46/RBAP48/MSI1 family. In terms of assembly, binds directly to helix 1 of the histone fold of histone H4, a region that is not accessible when H4 is in chromatin. Subunit of the type B histone acetyltransferase (HAT) complex, composed of RBBP7 and HAT1. Subunit of the core histone deacetylase (HDAC) complex, which is composed of HDAC1, HDAC2, RBBP4 and RBBP7. The core HDAC complex associates with SIN3A, ARID4B/SAP180, SAP18, SAP30, SAP130, SUDS3/SAP45 and possibly ARID4A/RBP1 and ING1 to form the SIN3 HDAC complex. Component of the nucleosome remodeling and deacetylase (NuRD) repressor complex, composed of core proteins MTA1, MTA2, MTA3, RBBP4, RBBP7, HDAC1, HDAC2, MBD2, MBD3, and peripherally associated proteins CDK2AP1, CDK2AP2, GATAD2A, GATAD2B, CHD3, CHD4 and CHD5. The exact stoichiometry of the NuRD complex is unknown, and some subunits such as MBD2 and MBD3, GATAD2A and GATAD2B, and CHD3, CHD4 and CHD5 define mutually exclusive NuRD complexes. The NuRD complex may interact with MBD3L1. The NuRD complex may interact with MBD3L2. Subunit of the PRC2/EED-EZH2 complex, which is composed of at least EED, EZH2, RBBP4, RBBP7 and SUZ12. The PRC2/EED-EZH2 complex may also associate with HDAC1. Component of the NURF-1 ISWI chromatin remodeling complex (also called the nucleosome-remodeling factor (NURF) complex) at least composed of SMARCA1, BPTF, RBBP4 and RBBP7. Within the complex interacts with SMARCA1. Component of the BPFT-SMARCA1 complex at least composed of SMARCA1, BPFT, RBBP4 and RBBP7; the complex is catalytically inactive and does not remodel chromatin. Within the complex interacts with SMARCA1. Interacts with BRCA1. Interacts with CDK2AP1. Interacts with CENPA. Interacts with CHD3. Interacts with CHD4. Interacts with CREBBP, and this interaction may be enhanced by the binding of phosphorylated CREB1 to CREBBP. Interacts with HDAC7. Interacts with MTA1. Interacts with PWWP2B. Interacts with RB1 (via viral protein-binding domain). Interacts with SUV39H1.

The protein localises to the nucleus. Core histone-binding subunit that may target chromatin remodeling factors, histone acetyltransferases and histone deacetylases to their histone substrates in a manner that is regulated by nucleosomal DNA. Component of several complexes which regulate chromatin metabolism. These include the type B histone acetyltransferase (HAT) complex, which is required for chromatin assembly following DNA replication; the core histone deacetylase (HDAC) complex, which promotes histone deacetylation and consequent transcriptional repression; the nucleosome remodeling and histone deacetylase complex (the NuRD complex), which promotes transcriptional repression by histone deacetylation and nucleosome remodeling; and the PRC2/EED-EZH2 complex, which promotes repression of homeotic genes during development; and the NURF (nucleosome remodeling factor) complex. The polypeptide is Histone-binding protein RBBP7 (RBBP7) (Bos taurus (Bovine)).